Reading from the N-terminus, the 180-residue chain is Probable chorismate pyruvate-lyase (180 aa).

Positions 82, 120, and 165 each coordinate substrate.

The protein belongs to the UbiC family.

The protein resides in the cytoplasm. The enzyme catalyses chorismate = 4-hydroxybenzoate + pyruvate. It functions in the pathway cofactor biosynthesis; ubiquinone biosynthesis. In terms of biological role, removes the pyruvyl group from chorismate, with concomitant aromatization of the ring, to provide 4-hydroxybenzoate (4HB) for the ubiquinone pathway. In Photobacterium profundum (strain SS9), this protein is Probable chorismate pyruvate-lyase.